The following is a 153-amino-acid chain: Cytochrome c-type biogenesis protein CcmE (153 aa).

Residues 1–6 (MNARRR) lie on the Cytoplasmic side of the membrane. Residues 7 to 27 (LWSLLMLILAVGTAATLTIMA) form a helical; Signal-anchor for type II membrane protein membrane-spanning segment. The Periplasmic segment spans residues 28–153 (LRRNLTYLYM…LDTPIAQTTP (126 aa)). The heme site is built by histidine 121 and tyrosine 125. The span at 130–141 (LTNKMQPTPTQH) shows a compositional bias: polar residues. Residues 130–153 (LTNKMQPTPTQHTHLDTPIAQTTP) are disordered.

This sequence belongs to the CcmE/CycJ family.

It localises to the cell inner membrane. In terms of biological role, heme chaperone required for the biogenesis of c-type cytochromes. Transiently binds heme delivered by CcmC and transfers the heme to apo-cytochromes in a process facilitated by CcmF and CcmH. This chain is Cytochrome c-type biogenesis protein CcmE, found in Xylella fastidiosa (strain 9a5c).